Here is a 186-residue protein sequence, read N- to C-terminus: Adenine phosphoribosyltransferase (186 aa).

This sequence belongs to the purine/pyrimidine phosphoribosyltransferase family. Homodimer.

The protein resides in the cytoplasm. It catalyses the reaction AMP + diphosphate = 5-phospho-alpha-D-ribose 1-diphosphate + adenine. Its pathway is purine metabolism; AMP biosynthesis via salvage pathway; AMP from adenine: step 1/1. Its function is as follows. Catalyzes a salvage reaction resulting in the formation of AMP, that is energically less costly than de novo synthesis. The protein is Adenine phosphoribosyltransferase of Xanthomonas oryzae pv. oryzae (strain MAFF 311018).